We begin with the raw amino-acid sequence, 117 residues long: Basic phospholipase A2 pseudexin A chain (117 aa).

7 disulfide bridges follow: cysteine 11–cysteine 71, cysteine 27–cysteine 117, cysteine 29–cysteine 45, cysteine 44–cysteine 98, cysteine 51–cysteine 91, cysteine 60–cysteine 84, and cysteine 78–cysteine 89. The Ca(2+) site is built by tyrosine 28, glycine 30, and glycine 32. The active site involves histidine 48. Aspartate 49 is a binding site for Ca(2+). Aspartate 92 is a catalytic residue.

It belongs to the phospholipase A2 family. Group I subfamily. D49 sub-subfamily. The cofactor is Ca(2+). Expressed by the venom gland.

It localises to the secreted. The catalysed reaction is a 1,2-diacyl-sn-glycero-3-phosphocholine + H2O = a 1-acyl-sn-glycero-3-phosphocholine + a fatty acid + H(+). In terms of biological role, PLA2 catalyzes the calcium-dependent hydrolysis of the 2-acyl groups in 3-sn-phosphoglycerides. The polypeptide is Basic phospholipase A2 pseudexin A chain (Pseudechis porphyriacus (Red-bellied black snake)).